A 150-amino-acid polypeptide reads, in one-letter code: Protein U1 (150 aa).

This sequence belongs to the nanovirus U1 protein family.

In Astragalus sinicus (Chinese milk vetch), this protein is Protein U1 (DNA-U1).